The chain runs to 72 residues: MAKEKDTIRTEGVVTEALPNATFRVKLDSGPEILAYISGKMRMHYIRILPGDRVVVEITPYDPTRGRIVYRK.

Positions 1–72 (MAKEKDTIRT…PTRGRIVYRK (72 aa)) constitute an S1-like domain.

The protein belongs to the IF-1 family. Component of the 30S ribosomal translation pre-initiation complex which assembles on the 30S ribosome in the order IF-2 and IF-3, IF-1 and N-formylmethionyl-tRNA(fMet); mRNA recruitment can occur at any time during PIC assembly.

Its subcellular location is the cytoplasm. One of the essential components for the initiation of protein synthesis. Stabilizes the binding of IF-2 and IF-3 on the 30S subunit to which N-formylmethionyl-tRNA(fMet) subsequently binds. Helps modulate mRNA selection, yielding the 30S pre-initiation complex (PIC). Upon addition of the 50S ribosomal subunit IF-1, IF-2 and IF-3 are released leaving the mature 70S translation initiation complex. The polypeptide is Translation initiation factor IF-1 (Thermus thermophilus (strain ATCC BAA-163 / DSM 7039 / HB27)).